An 842-amino-acid chain; its full sequence is MVSESCSRNYNHPYTPYDIQIQLMDAIYNTIENGYKIGLFESPTGTGKTLSIICSSMTWLRTFKRNNTFLETNNEVEDVYESESEEDEPEWVKKAYQSSIVNRSKNKLIEYEHYLDKIEKEHAQNKRKEEELEIKVHKRRKAMTAAGTDLSEESYLPMDYYSDSEVGKIEDQNLAITKEINRLLKKVENKEEVSYINECPIKIFFSSRTHSQLNQFSSQLRLTNFQASFEDLEERTKYIPLGSRKQLCINEKVRSKGNDQSVNDACLDLQRETNGCQYLPKNYMMSSVTKEFADLSLAKIRDIEDLNELGIELNICPYYSVRKGIEMTEIISLPYQMIFQDTTRKILNLDIKDSIIIIDEAHNIIDVITSMYSIKITSDQLNKVIKSLKIYLNKFLKRLNSGNRINLMKLIKICQILLKFLNTNSEKVKSGDEVQIQDIFKDSTGDLVNIHKLDQFLTKSKIAYKIESYIEKTEMETDNGEKKGRITNSGGSSSSSSSSNPLLFTIIKFLRTLTNLSKEGKFFWDNENGTISLNYMLLDPSAVFKEIVDQAKCVLLCGGTMEPMSDYMDYLFPSVPTNKINTFACGHVIPKENLQVFPISQWNDTNFEFSYQKRNDSKQLMALGEFLIEITKRVPYGVVIFFPSYKYLDQVLQFWRDTKILTSIESEKTIFREPKDPSNVEKVLNEYGYLIQTERKGAILFSVVGGKMSEGINFSDDLARAVIMVGLPYPNAYSGEMVTKRKYIETSELSNGGTTTDAKEKSRNYYENLCMRAVNQSIGRSIRHINDYSIIYLVDRRFSTPRIQNKLSQWVKERISITTTNNNNNNSIYIMESTTDFFNIIR.

Residues cysteine 6–leucine 417 enclose the Helicase ATP-binding domain. An ATP-binding site is contributed by serine 42–threonine 49. The [4Fe-4S] cluster site is built by cysteine 248, cysteine 266, cysteine 276, and cysteine 316. A DEAH box motif is present at residues aspartate 359–histidine 362. Positions glutamate 476–serine 499 are disordered. Residues serine 489 to serine 499 show a composition bias toward low complexity.

This sequence belongs to the DEAD box helicase family. DEAH subfamily. DDX11/CHL1 sub-subfamily. [4Fe-4S] cluster serves as cofactor.

Its subcellular location is the nucleus. The catalysed reaction is Couples ATP hydrolysis with the unwinding of duplex DNA at the replication fork by translocating in the 5'-3' direction. This creates two antiparallel DNA single strands (ssDNA). The leading ssDNA polymer is the template for DNA polymerase III holoenzyme which synthesizes a continuous strand.. It carries out the reaction ATP + H2O = ADP + phosphate + H(+). ATP-dependent DNA helicase important for chromosome transmission and normal cell cycle progression in G(2)/M. May have a role in changing DNA topology to allow the loading of proteins involved in maintaining sister chromatid cohesion in the vicinity of the centromeres. Has a specific role in chromosome segregation during meiosis II. The protein is ATP-dependent DNA helicase CHL1 (CHL1) of Candida albicans (strain SC5314 / ATCC MYA-2876) (Yeast).